The sequence spans 230 residues: Large ribosomal subunit protein uL1 (230 aa).

It belongs to the universal ribosomal protein uL1 family. As to quaternary structure, part of the 50S ribosomal subunit.

Functionally, binds directly to 23S rRNA. The L1 stalk is quite mobile in the ribosome, and is involved in E site tRNA release. Its function is as follows. Protein L1 is also a translational repressor protein, it controls the translation of the L11 operon by binding to its mRNA. The chain is Large ribosomal subunit protein uL1 from Granulibacter bethesdensis (strain ATCC BAA-1260 / CGDNIH1).